The sequence spans 218 residues: MSKPRIKLKLPDNADKLLLHSCCAPCSGEVMETLLYSGIDYSIFFYNPNIHPVKEYLIRKEENIRFAEKHNIPFIDCDYDTDNWFERAKGMENEPEKGIRCTMCFDMRFERAALYAYENGFKVFSSSLGISRWKNMEQINDCGIRAASHYPDIHYWDYNWRKNGGATRMLEISKREEFYQQEYCGCVYSLRDTNRWRMSQGRDRIQLGVKFYSASDPD.

The [4Fe-4S] cluster site is built by Cys-22, Cys-23, Cys-101, and Cys-104. A disulfide bond links Cys-184 and Cys-186.

This sequence belongs to the QueH family.

It carries out the reaction epoxyqueuosine(34) in tRNA + AH2 = queuosine(34) in tRNA + A + H2O. The protein operates within tRNA modification; tRNA-queuosine biosynthesis. Catalyzes the conversion of epoxyqueuosine (oQ) to queuosine (Q), which is a hypermodified base found in the wobble positions of tRNA(Asp), tRNA(Asn), tRNA(His) and tRNA(Tyr). The protein is Epoxyqueuosine reductase QueH of Acinetobacter baylyi (strain ATCC 33305 / BD413 / ADP1).